The following is a 119-amino-acid chain: Autophagy-related protein 8 (119 aa).

Residue Gly-116 is the site of Phosphatidylethanolamine amidated glycine attachment. Positions 117-119 are cleaved as a propeptide — removed in mature form; it reads EAL.

This sequence belongs to the ATG8 family. Conjugation to phosphatidylethanolamine (PE) leads to homodimerization. Interacts with ATG1, ATG3, ATG4, ATG7 and ATG12. In terms of processing, the C-terminal Glu-117, Ala-118 and Leu-119 residues of ATG8 are removed by ATG4 to expose Gly-116 at the C-terminus. This Gly-116 forms then a thioester bond with ATG7 (E1-like activating enzyme) before being transferred to ATG3 (the specific E2 conjugating enzyme), in order to be finally amidated with phosphatidylethanolamine. This lipid modification anchors ATG8 to membranes and can be reversed by ATG4, releasing soluble ATG8.

It localises to the cytoplasmic vesicle. The protein localises to the cvt vesicle membrane. The protein resides in the autophagosome membrane. Its subcellular location is the vacuole membrane. Ubiquitin-like modifier involved in cytoplasm to vacuole transport (Cvt) vesicles and autophagosome formation. With ATG4, mediates the delivery of the vesicles and autophagosomes to the vacuole via the microtubule cytoskeleton. Required for selective autophagic degradation of the nucleus (nucleophagy) as well as for mitophagy which contributes to regulate mitochondrial quantity and quality by eliminating the mitochondria to a basal level to fulfill cellular energy requirements and preventing excess ROS production. Also participates in membrane fusion events that take place in the early secretory pathway. Also involved in endoplasmic reticulum-specific autophagic process and is essential for the survival of cells subjected to severe ER stress. The ATG8-PE conjugate mediates tethering between adjacent membranes and stimulates membrane hemifusion, leading to expansion of the autophagosomal membrane during autophagy. Moreover not only conjugation, but also subsequent ATG8-PE deconjugation is an important step required to facilitate multiple events during macroautophagy, and especially for efficient autophagosome biogenesis, the assembly of ATG9-containing tubulovesicular clusters into phagophores/autophagosomes, and for the disassembly of PAS-associated ATG components. Autophagy is required for conidiation, aerial mycelial growth, and pseudothecia formation, but not for host invasion. This is Autophagy-related protein 8 from Cochliobolus heterostrophus (strain C4 / ATCC 48331 / race T) (Southern corn leaf blight fungus).